An 819-amino-acid chain; its full sequence is Pentatricopeptide repeat-containing protein At5g02860 (819 aa).

The interval 57–93 (QNPNSRQPISSQTSRNRNRTRIGKSRDPNLGKPWSYH) is disordered. PPR repeat units lie at residues 172–206 (DNSV…GFSL), 207–241 (DVYS…GCKP), 242–277 (TLIT…GIAP), 278–312 (DAYT…GFSY), 313–347 (DKVT…GFSP), 348–382 (SIVT…GTKP), 383–417 (DVFT…GCKP), 418–452 (NICT…GLSP), 453–487 (DIVT…GFVP), 488–522 (ERET…GVTP), 523–557 (DLST…RCKP), 558–592 (NELT…VIEP), 593–627 (RAVL…GFSP), 628–662 (DITT…GFTP), 663–697 (SMAT…GIKP), 698–732 (DIIS…GIVP), 733–767 (DVIT…GCRP), and 768–802 (NQNT…DPHA).

This sequence belongs to the PPR family. P subfamily.

This chain is Pentatricopeptide repeat-containing protein At5g02860, found in Arabidopsis thaliana (Mouse-ear cress).